The sequence spans 111 residues: uncharacterized protein (111 aa).

Transmembrane regions (helical) follow at residues 4–21 (FITA…FVSF), 28–47 (LVYF…YMIY), 51–73 (TGIR…VTAF), and 80–102 (SFFF…YLGM).

The protein localises to the cell membrane. This is an uncharacterized protein from Bacillus subtilis (strain 168).